A 149-amino-acid chain; its full sequence is MAEERSKDDIPDWWEKEWVEFRYRGYTLGELMKMPIEEFIELLPARQRRSLKRGLPSRHKKLLRKVRRARRLLRRGKKPPVIRTHCRDMIILPEMVGLTIAVYNGKEFKEVKIEPEMIGHYLGEFAKTRKTVEHGGIGATRSSLFVPLK.

The protein belongs to the universal ribosomal protein uS19 family.

In terms of biological role, protein S19 forms a complex with S13 that binds strongly to the 16S ribosomal RNA. The protein is Small ribosomal subunit protein uS19 of Methanopyrus kandleri (strain AV19 / DSM 6324 / JCM 9639 / NBRC 100938).